The chain runs to 456 residues: tRNA-2-methylthio-N(6)-dimethylallyladenosine synthase (456 aa).

The 117-residue stretch at 13-129 (RYLYVRTFGC…IASLLEEVER (117 aa)) folds into the MTTase N-terminal domain. Positions 22, 58, 92, 168, 172, and 175 each coordinate [4Fe-4S] cluster. Positions 154–384 (GTGDVVAQVT…QSIQADITLQ (231 aa)) constitute a Radical SAM core domain. One can recognise a TRAM domain in the interval 387–450 (LAETGTVREV…SHSLKGELLS (64 aa)).

This sequence belongs to the methylthiotransferase family. MiaB subfamily. In terms of assembly, monomer. [4Fe-4S] cluster is required as a cofactor.

It localises to the cytoplasm. It catalyses the reaction N(6)-dimethylallyladenosine(37) in tRNA + (sulfur carrier)-SH + AH2 + 2 S-adenosyl-L-methionine = 2-methylsulfanyl-N(6)-dimethylallyladenosine(37) in tRNA + (sulfur carrier)-H + 5'-deoxyadenosine + L-methionine + A + S-adenosyl-L-homocysteine + 2 H(+). Catalyzes the methylthiolation of N6-(dimethylallyl)adenosine (i(6)A), leading to the formation of 2-methylthio-N6-(dimethylallyl)adenosine (ms(2)i(6)A) at position 37 in tRNAs that read codons beginning with uridine. In Syntrophobacter fumaroxidans (strain DSM 10017 / MPOB), this protein is tRNA-2-methylthio-N(6)-dimethylallyladenosine synthase.